The following is a 203-amino-acid chain: MSGKKKSKSDTVPLDLDNIKPLDHLQAVPKTRKMSMTSIESADEPGGFKEVLLPPTIKEFDELEQFEAFVRDETWDNDFDYFHGRLHYYPPFVLKECHDEIEKIKPTSNKNSSKFKRNLQHHIKKHLIKDLEKCCGYELNFDKAEEIESFDKLTWKFKDETDHGFSKEEEDKYDRHWKIELDITSHNDSALVDIDMKSIPIGH.

The protein belongs to the RGI1 family.

The protein resides in the cell membrane. Its function is as follows. Involved in the control of energetic metabolism and significantly contribute to cell fitness, especially under respiratory growth conditions. This Lodderomyces elongisporus (strain ATCC 11503 / CBS 2605 / JCM 1781 / NBRC 1676 / NRRL YB-4239) (Yeast) protein is Respiratory growth induced protein 1 (RGI1).